Consider the following 75-residue polypeptide: UPF0154 protein MMOB4450 (75 aa).

The chain crosses the membrane as a helical span at residues 7-27 (IGLIVGLSILFTIVGLVVGFF).

This sequence belongs to the UPF0154 family.

Its subcellular location is the cell membrane. In Mycoplasma mobile (strain ATCC 43663 / 163K / NCTC 11711) (Mesomycoplasma mobile), this protein is UPF0154 protein MMOB4450.